We begin with the raw amino-acid sequence, 213 residues long: Alkylbase DNA glycosidase-like protein mag2 (213 aa).

Residues Lys53, Leu54, Ser61, His91, Gly94, Ser96, Lys97, Lys99, Glu102, Lys137, Gly138, Lys140, Thr143, Ser163, and Thr164 each coordinate DNA.

The protein belongs to the alkylbase DNA glycosidase AlkA family.

Its subcellular location is the nucleus. In terms of biological role, alkylbase DNA glycosidase-like protein that shows no DNA glycosylase activity for alkylated bases. The molecular role of mag2 appears to be abasic (AP) site recognition and protection, while possibly facilitating damage signaling by structurally sculpting the DNA substrate. Stimulates AP site binding to mismatch repair protein mutS. The protein is Alkylbase DNA glycosidase-like protein mag2 of Schizosaccharomyces pombe (strain 972 / ATCC 24843) (Fission yeast).